A 110-amino-acid polypeptide reads, in one-letter code: Large ribosomal subunit protein uL22 (110 aa).

This sequence belongs to the universal ribosomal protein uL22 family. Part of the 50S ribosomal subunit.

In terms of biological role, this protein binds specifically to 23S rRNA; its binding is stimulated by other ribosomal proteins, e.g. L4, L17, and L20. It is important during the early stages of 50S assembly. It makes multiple contacts with different domains of the 23S rRNA in the assembled 50S subunit and ribosome. Its function is as follows. The globular domain of the protein is located near the polypeptide exit tunnel on the outside of the subunit, while an extended beta-hairpin is found that lines the wall of the exit tunnel in the center of the 70S ribosome. This chain is Large ribosomal subunit protein uL22, found in Photobacterium profundum (strain SS9).